The sequence spans 362 residues: Apelin receptor A (362 aa).

Over 1-37 (METEGLSPMLYEDDYYYGNETGLQPCDETDWDFSYSL) the chain is Extracellular. An N-linked (GlcNAc...) asparagine glycan is attached at N19. Intrachain disulfides connect C26–C286 and C108–C185. Residues 38–58 (LPVFYMIVFVLGLSGNGVVIF) form a helical membrane-spanning segment. At 59 to 76 (TVWKSKPKRRSADTYIGN) the chain is on the cytoplasmic side. A helical transmembrane segment spans residues 77-97 (LALADLAFVVTLPLWATYTAL). The Extracellular portion of the chain corresponds to 98–110 (GFHWPFGSALCKL). Residues 111–131 (SSYLVLLNMFASVFCLTCLSF) traverse the membrane as a helical segment. At 132 to 151 (DRYLAIVHSLSSAKLRSRSS) the chain is on the cytoplasmic side. A helical membrane pass occupies residues 152–172 (IIVSLAVIWLFSGLLALPSLI). The Extracellular segment spans residues 173–199 (LRDTRVEGNNTICDLDFSGVSSKENEN). Residue N181 is glycosylated (N-linked (GlcNAc...) asparagine). Residues 200 to 220 (FWIGGLSILTTVPGFLLPLLL) traverse the membrane as a helical segment. The Cytoplasmic segment spans residues 221 to 248 (MTIFYCFIGGKVTMHFQNLKKEEQKKKR). A helical membrane pass occupies residues 249–269 (LLKIIITLVVVFAICWLPFHI). At 270–296 (LKTIHFLDLMGFLELSCSTQNIIVSLH) the chain is on the extracellular side. Residues 297 to 317 (PYATCLAYVNSCLNPFLYAFF) traverse the membrane as a helical segment. Topologically, residues 318-362 (DLRFRSQCFFFFGFKKVLQGHLSNTSSSLSAQTQKSEIHSLATKV) are cytoplasmic.

This sequence belongs to the G-protein coupled receptor 1 family. Expressed in all blood vessels including the posterior cardinal vein, intersomitic veins and the vitelline vein network. At the gastrula stage, exclusively expressed in the mesodermal layer and at the neurula stage in the lateral plate mesoderm. Larval expression is observed in the endothelium of the primary blood vessels and the forming heart.

It localises to the cell membrane. In terms of biological role, g protein-coupled receptor for peptide hormones apelin (apln) and apelin receptor early endogenous ligand (apela), that plays a role in the regulation of normal cardiovascular function and fluid homeostasis. When acting as apelin receptor, activates both G(i) protein pathway that inhibits adenylate cyclase activity, and the beta-arrestin pathway that promotes internalization of the receptor. Also functions as mechanoreceptor that is activated by pathological stimuli in a G-protein-independent fashion to induce beta-arrestin signaling, hence eliciting cardiac hypertrophy. However, the presence of apelin ligand blunts cardiac hypertrophic induction from APLNR/APJ on response to pathological stimuli. Plays a key role in early development such as gastrulation, blood vessels formation and heart morphogenesis by acting as a receptor for apela hormone, promoting endoderm and mesendoderm cell migration and regulating the migration of cells fated to become myocardial progenitors, respectively. Promotes angioblast migration toward the embryonic midline, i.e. the position of the future vessel formation, during vasculogenesis. May promote sinus venosus (SV)-derived endothelial cells migration into the developing heart to promote coronary blood vessel development. Required for cardiovascular development, particularly for intersomitic vein angiogenesis by acting as a receptor for apln hormone. Also plays a role in various processes in adults such as regulation of blood vessel formation, blood pressure, heart contractility, and heart failure. Acts upstream of the i/o type of G-alpha proteins in the differentiation of endothelium, erythroid cells, myeloid cells and cardiomyocytes. This is Apelin receptor A (aplnr-a) from Xenopus laevis (African clawed frog).